The primary structure comprises 101 residues: UPF0235 protein SG2030 (101 aa).

Belongs to the UPF0235 family.

In Sodalis glossinidius (strain morsitans), this protein is UPF0235 protein SG2030.